We begin with the raw amino-acid sequence, 300 residues long: MFYEFALIGTTASGKSSFSIELAKEIEAVILSLDSLCLYKNIDIASAKPNKNELSIIKHFGINLVYPDSHFCVGDFIKEYHKAKEFAISKNCPLIITGGSGFYLKSMLKGLSPKLEKIKIELNNDEIWSIAEKIDPNFTSKFSKNDEFRLHKWYQIYKLTNEIPTNWLVKNTSAPTIQNLKIYELNWDKEELKNRIKNRTKIMLNSGLIDEAKKLFTTYPKDIKALKSIGLKECGEYFEAKLGDIKSKEAILNLENLISIHTIQLAKKQRTFNSGAFKDRIILDTKSLKVKHFLDKYLNL.

Glycine 9 to serine 16 serves as a coordination point for ATP. Residue threonine 11–serine 16 coordinates substrate. Positions aspartate 34–cysteine 37 are interaction with substrate tRNA.

The protein belongs to the IPP transferase family. As to quaternary structure, monomer. Requires Mg(2+) as cofactor.

It carries out the reaction adenosine(37) in tRNA + dimethylallyl diphosphate = N(6)-dimethylallyladenosine(37) in tRNA + diphosphate. Functionally, catalyzes the transfer of a dimethylallyl group onto the adenine at position 37 in tRNAs that read codons beginning with uridine, leading to the formation of N6-(dimethylallyl)adenosine (i(6)A). This chain is tRNA dimethylallyltransferase, found in Campylobacter fetus subsp. fetus (strain 82-40).